Consider the following 202-residue polypeptide: Pyridoxal 5'-phosphate synthase subunit PdxT (202 aa).

Position 52-54 (52-54 (GES)) interacts with L-glutamine. C84 (nucleophile) is an active-site residue. L-glutamine is bound by residues R120 and 148–149 (IR). Residues H185 and E187 each act as charge relay system in the active site.

This sequence belongs to the glutaminase PdxT/SNO family. In the presence of PdxS, forms a dodecamer of heterodimers. Only shows activity in the heterodimer.

It carries out the reaction aldehydo-D-ribose 5-phosphate + D-glyceraldehyde 3-phosphate + L-glutamine = pyridoxal 5'-phosphate + L-glutamate + phosphate + 3 H2O + H(+). It catalyses the reaction L-glutamine + H2O = L-glutamate + NH4(+). It functions in the pathway cofactor biosynthesis; pyridoxal 5'-phosphate biosynthesis. Catalyzes the hydrolysis of glutamine to glutamate and ammonia as part of the biosynthesis of pyridoxal 5'-phosphate. The resulting ammonia molecule is channeled to the active site of PdxS. This is Pyridoxal 5'-phosphate synthase subunit PdxT from Methanopyrus kandleri (strain AV19 / DSM 6324 / JCM 9639 / NBRC 100938).